The following is a 99-amino-acid chain: DNA/RNA-binding protein Alba 1 (99 aa).

Position 17 is an N6-acetyllysine (Lys-17).

It belongs to the histone-like Alba family. Acetylated. Acetylation at Lys-17 decreases DNA-binding affinity.

Its subcellular location is the cytoplasm. The protein resides in the chromosome. Functionally, binds double-stranded DNA tightly but without sequence specificity. Involved in DNA compaction. The sequence is that of DNA/RNA-binding protein Alba 1 from Sulfurisphaera tokodaii (strain DSM 16993 / JCM 10545 / NBRC 100140 / 7) (Sulfolobus tokodaii).